Here is a 1179-residue protein sequence, read N- to C-terminus: Dynein axonemal assembly factor 9 (1179 aa).

In terms of assembly, interacts with ARL3.

May act as an effector for ARL3. The sequence is that of Dynein axonemal assembly factor 9 from Mus musculus (Mouse).